We begin with the raw amino-acid sequence, 151 residues long: Protein ripply1 (151 aa).

The WRPW motif signature appears at 57 to 60 (WRPW). Positions 96-131 (HPVRLFWPKSRSFDYLYSAGEILLQNFPVQATINLY) are ripply homology domain. The tract at residues 130–151 (LYEDSDSEEEEEDEEQEDEEEK) is disordered. Positions 132 to 151 (EDSDSEEEEEDEEQEDEEEK) are enriched in acidic residues.

Belongs to the ripply family.

It is found in the nucleus. Functionally, plays a role in somitogenesis. Essential for transcriptional repression of the segmental patterning genes, thus terminating the segmentation program in the presomitic mesoderm, and also required for the maintenance of rostrocaudal polarity in somites. The protein is Protein ripply1 of Homo sapiens (Human).